Consider the following 1176-residue polypeptide: Growth-differentiation transition protein 5 (1176 aa).

An N-terminal signal peptide occupies residues 1–25; that stretch reads MKNNFFKKTIILLIFLSIFILYSNA. The Extracellular segment spans residues 26–913; it reads DEETITTPPG…DVPANENTLN (888 aa). The helical transmembrane segment at 914 to 934 threads the bilayer; sequence LLTIVLPICSAVVVASSVMLG. Residues 935–1176 lie on the Cytoplasmic side of the membrane; it reads RLFYKKKFKK…NVGYNVHEYF (242 aa). Composition is skewed to low complexity over residues 965–974 and 1053–1066; these read SNIENKSESI and PQISPDSPQHSIPS. Disordered regions lie at residues 965–985 and 1050–1080; these read SNIENKSESIATPQQRNEQKE and VDTPQISPDSPQHSIPSSSPPPPPLPLPPST. Pro residues predominate over residues 1067-1078; sequence SSPPPPPLPLPP.

The protein belongs to the GDT family.

Its subcellular location is the membrane. The polypeptide is Growth-differentiation transition protein 5 (gdt5) (Dictyostelium discoideum (Social amoeba)).